A 265-amino-acid chain; its full sequence is 3-methyl-2-oxobutanoate hydroxymethyltransferase (265 aa).

2 residues coordinate Mg(2+): aspartate 46 and aspartate 85. Residues 46–47 (DS), aspartate 85, and lysine 114 contribute to the 3-methyl-2-oxobutanoate site. Glutamate 116 is a Mg(2+) binding site. The active-site Proton acceptor is glutamate 183.

It belongs to the PanB family. As to quaternary structure, homodecamer; pentamer of dimers. It depends on Mg(2+) as a cofactor.

It localises to the cytoplasm. It catalyses the reaction 3-methyl-2-oxobutanoate + (6R)-5,10-methylene-5,6,7,8-tetrahydrofolate + H2O = 2-dehydropantoate + (6S)-5,6,7,8-tetrahydrofolate. It participates in cofactor biosynthesis; coenzyme A biosynthesis. Functionally, catalyzes the reversible reaction in which hydroxymethyl group from 5,10-methylenetetrahydrofolate is transferred onto alpha-ketoisovalerate to form ketopantoate. The chain is 3-methyl-2-oxobutanoate hydroxymethyltransferase from Pyrobaculum calidifontis (strain DSM 21063 / JCM 11548 / VA1).